The following is a 497-amino-acid chain: ATP-dependent RNA helicase CshA (497 aa).

The short motif at 1–29 is the Q motif element; that stretch reads MKFSELGLSDSLLKAIKRSGYEEATPIQE. One can recognise a Helicase ATP-binding domain in the interval 32–202; sequence IPMVLEGKDV…VQFMSDPETV (171 aa). 45 to 52 is a binding site for ATP; sequence AQTGTGKT. Residues 150 to 153 carry the DEAD box motif; that stretch reads DEAD. In terms of domain architecture, Helicase C-terminal spans 228-373; sequence DIMTRLIDVQ…PLKPPTAEEA (146 aa). Residues 425–497 are disordered; sequence AASEVPVKIT…SFNIRHRKEN (73 aa). Residues 448–458 show a composition bias toward low complexity; the sequence is RNGNRNNSHGG. 2 stretches are compositionally biased toward basic residues: residues 459–473 and 481–497; these read NHYR…QHGS and KSHS…RKEN.

Belongs to the DEAD box helicase family. CshA subfamily. Oligomerizes, may be a member of the RNA degradosome.

It is found in the cytoplasm. The protein localises to the cell membrane. It carries out the reaction ATP + H2O = ADP + phosphate + H(+). Its function is as follows. DEAD-box RNA helicase possibly involved in RNA degradation. Unwinds dsRNA in both 5'- and 3'-directions, has RNA-dependent ATPase activity. Over-expression leads to cell aggregation. The polypeptide is ATP-dependent RNA helicase CshA (Limosilactobacillus reuteri (Lactobacillus reuteri)).